Consider the following 215-residue polypeptide: 3-demethoxyubiquinol 3-hydroxylase (215 aa).

Residues 26 to 47 form a disordered region; the sequence is PSSAHSQRPSPAVVQPEHKMSE. Fe cation-binding residues include Glu-64, Glu-94, His-97, Glu-146, Glu-178, and His-181.

Belongs to the COQ7 family. Fe cation serves as cofactor.

The protein localises to the cell membrane. The enzyme catalyses a 5-methoxy-2-methyl-3-(all-trans-polyprenyl)benzene-1,4-diol + AH2 + O2 = a 3-demethylubiquinol + A + H2O. It participates in cofactor biosynthesis; ubiquinone biosynthesis. Catalyzes the hydroxylation of 2-nonaprenyl-3-methyl-6-methoxy-1,4-benzoquinol during ubiquinone biosynthesis. The protein is 3-demethoxyubiquinol 3-hydroxylase of Pseudomonas syringae pv. syringae (strain B728a).